The following is a 390-amino-acid chain: MYIAGVMSGTSLDGIDVALVHIEGSGVDSKIELIHFTTVPFCNDMKNEIQQALSIETSNVQLICSLNFKLGLCFANAVKEVCKEANFPLRQLDLIGSHGQTIYHQPKQEGNIISSTLQIGEPAVIAYETNTTVISNFRTMDMAAGGQGAPLVPYSEIILYRHQTKNRLLQNIGGIGNVTVVPSKRSKESVIAFDTGPGNMVIDEVCQRLFHVPYDQNGWIAKQGVVVDEILTYCMNHPFLNMKPPKSTGREQFGEAFVTELLNRFKKHSKENILATVTMFTACSIVHHYKAFILPYYEIDEVILGGGGSYNNTLVEMLRNGLREEKCSICIQEDIGHSSAAKEAIAFAILANETYHRNPSNVLSATGAKNSVILGNITFPPYADENEANI.

9 to 16 provides a ligand contact to ATP; sequence GTSLDGID.

It belongs to the anhydro-N-acetylmuramic acid kinase family.

The enzyme catalyses 1,6-anhydro-N-acetyl-beta-muramate + ATP + H2O = N-acetyl-D-muramate 6-phosphate + ADP + H(+). It participates in amino-sugar metabolism; 1,6-anhydro-N-acetylmuramate degradation. Its pathway is cell wall biogenesis; peptidoglycan recycling. In terms of biological role, catalyzes the specific phosphorylation of 1,6-anhydro-N-acetylmuramic acid (anhMurNAc) with the simultaneous cleavage of the 1,6-anhydro ring, generating MurNAc-6-P. Is required for the utilization of anhMurNAc either imported from the medium or derived from its own cell wall murein, and thus plays a role in cell wall recycling. The sequence is that of Anhydro-N-acetylmuramic acid kinase from Bacillus cereus (strain ATCC 14579 / DSM 31 / CCUG 7414 / JCM 2152 / NBRC 15305 / NCIMB 9373 / NCTC 2599 / NRRL B-3711).